The primary structure comprises 331 residues: MQYFDIKKSLPVFCSLLITACSGGGGGGSNNSNHQAHPVNQVPAPVLHVAAKPQQHVEQEVIEKKPPVPVTRTASQSSFYSAKAPSQVSHDKRSVHWKGESVSEKEHLDFSYSKDAVFTRHLVTNPNAVYSTDPNLISKDIKYITLTTTGYNQDNKSGPNYELNLLDENIYYGYYRDSQDMNHVENIYVYGFKKDAENQDNLQFLTANYQGEFLFSTATNPNVPVLGKAVLNYKEGKAKGEILERDSNYKLFDIYVNERPNQAILNPVAERLPTSDLIMNTRKNSPDRVTIDLHFIKGQDNQENKYIVGQGGNEKYWGVLGLEKKETKAEK.

The N-terminal stretch at 1-20 (MQYFDIKKSLPVFCSLLITA) is a signal peptide. Cys21 carries the N-palmitoyl cysteine lipid modification. Cys21 carries S-diacylglycerol cysteine lipidation.

Its subcellular location is the cell outer membrane. The protein resides in the cell surface. The polypeptide is Outer membrane lipoprotein PM1514 (Pasteurella multocida (strain Pm70)).